The following is a 105-amino-acid chain: UPF0145 protein LPC_0273 (105 aa).

This sequence belongs to the UPF0145 family.

In Legionella pneumophila (strain Corby), this protein is UPF0145 protein LPC_0273.